The sequence spans 379 residues: Flagellin A (379 aa).

2 coiled-coil regions span residues 104–129 and 314–341; these read NSAS…IAET and QNRL…IKDT.

Belongs to the bacterial flagellin family. As to quaternary structure, heteromer of multiple flagellin subunits including FlaA, FlaB, FlaC, FlaD and FlaE.

The protein resides in the secreted. It localises to the bacterial flagellum. Functionally, flagellin is the subunit protein which polymerizes to form the filaments of bacterial flagella. FlaA is required to form a core or scaffold into which the other flagellins are inserted to provide structural integrity. Essential for flagellar synthesis and motility; important for full virulence. This chain is Flagellin A (flaA), found in Vibrio cholerae serotype O1 (strain ATCC 39541 / Classical Ogawa 395 / O395).